We begin with the raw amino-acid sequence, 580 residues long: Fumarate hydratase class I, aerobic (580 aa).

Cysteine 105, cysteine 224, and cysteine 318 together coordinate [4Fe-4S] cluster.

This sequence belongs to the class-I fumarase family. Homodimer. [4Fe-4S] cluster is required as a cofactor.

It carries out the reaction (S)-malate = fumarate + H2O. The catalysed reaction is oxaloacetate = enol-oxaloacetate. It participates in carbohydrate metabolism; tricarboxylic acid cycle; (S)-malate from fumarate: step 1/1. Catalyzes the reversible hydration of fumarate to (S)-malate. Functions as an aerobic enzyme in the direction of malate formation as part of the citric acid cycle. Accounts for about 80% of the fumarase activity when the bacteria grow aerobically. To a lesser extent, also displays D-tartrate dehydratase activity in vitro, but is not able to convert (R)-malate, L-tartrate or meso-tartrate. Can also catalyze the isomerization of enol- to keto-oxaloacetate. The chain is Fumarate hydratase class I, aerobic from Salmonella typhimurium (strain LT2 / SGSC1412 / ATCC 700720).